The chain runs to 750 residues: Photosystem I P700 chlorophyll a apoprotein A1 (750 aa).

Transmembrane regions (helical) follow at residues V70 to A93, L156 to H179, L195 to L219, I291 to Y309, W346 to Y369, L385 to V411, A433 to H455, and F531 to L549. C573 and C582 together coordinate [4Fe-4S] cluster. A run of 2 helical transmembrane segments spans residues H589–W610 and L664–F686. H675 contributes to the chlorophyll a' binding site. Positions 683 and 691 each coordinate chlorophyll a. Position 692 (W692) interacts with phylloquinone. Residues A724–A744 form a helical membrane-spanning segment.

The protein belongs to the PsaA/PsaB family. As to quaternary structure, the PsaA/B heterodimer binds the P700 chlorophyll special pair and subsequent electron acceptors. PSI consists of a core antenna complex that captures photons, and an electron transfer chain that converts photonic excitation into a charge separation. The eukaryotic PSI reaction center is composed of at least 11 subunits. The cofactor is P700 is a chlorophyll a/chlorophyll a' dimer, A0 is one or more chlorophyll a, A1 is one or both phylloquinones and FX is a shared 4Fe-4S iron-sulfur center..

It is found in the plastid. The protein resides in the chloroplast thylakoid membrane. The enzyme catalyses reduced [plastocyanin] + hnu + oxidized [2Fe-2S]-[ferredoxin] = oxidized [plastocyanin] + reduced [2Fe-2S]-[ferredoxin]. In terms of biological role, psaA and PsaB bind P700, the primary electron donor of photosystem I (PSI), as well as the electron acceptors A0, A1 and FX. PSI is a plastocyanin-ferredoxin oxidoreductase, converting photonic excitation into a charge separation, which transfers an electron from the donor P700 chlorophyll pair to the spectroscopically characterized acceptors A0, A1, FX, FA and FB in turn. Oxidized P700 is reduced on the lumenal side of the thylakoid membrane by plastocyanin. The protein is Photosystem I P700 chlorophyll a apoprotein A1 of Crucihimalaya wallichii (Rock-cress).